A 345-amino-acid polypeptide reads, in one-letter code: UDP-N-acetylenolpyruvoylglucosamine reductase (345 aa).

In terms of domain architecture, FAD-binding PCMH-type spans 25-193 (LPAHCTDFVS…VGVTFLLPKA (169 aa)). Residue Arg-169 is part of the active site. Ser-237 serves as the catalytic Proton donor. Glu-333 is a catalytic residue.

The protein belongs to the MurB family. FAD serves as cofactor.

Its subcellular location is the cytoplasm. The enzyme catalyses UDP-N-acetyl-alpha-D-muramate + NADP(+) = UDP-N-acetyl-3-O-(1-carboxyvinyl)-alpha-D-glucosamine + NADPH + H(+). Its pathway is cell wall biogenesis; peptidoglycan biosynthesis. In terms of biological role, cell wall formation. This is UDP-N-acetylenolpyruvoylglucosamine reductase from Pseudoalteromonas atlantica (strain T6c / ATCC BAA-1087).